The sequence spans 242 residues: Glucosamine-6-phosphate deaminase (242 aa).

The active-site Proton acceptor; for enolization step is the Asp-71. Residue Asn-142 is the For ring-opening step of the active site. Residue His-144 is the Proton acceptor; for ring-opening step of the active site. Glu-149 (for ring-opening step) is an active-site residue.

This sequence belongs to the glucosamine/galactosamine-6-phosphate isomerase family. NagB subfamily.

The enzyme catalyses alpha-D-glucosamine 6-phosphate + H2O = beta-D-fructose 6-phosphate + NH4(+). It functions in the pathway amino-sugar metabolism; N-acetylneuraminate degradation; D-fructose 6-phosphate from N-acetylneuraminate: step 5/5. Functionally, catalyzes the reversible isomerization-deamination of glucosamine 6-phosphate (GlcN6P) to form fructose 6-phosphate (Fru6P) and ammonium ion. The protein is Glucosamine-6-phosphate deaminase of Malacoplasma penetrans (strain HF-2) (Mycoplasma penetrans).